Consider the following 87-residue polypeptide: Small ribosomal subunit protein bS20 (87 aa).

Over residues 1 to 15 (MANHKSAAKRARQSI) the composition is skewed to basic residues. Positions 1–29 (MANHKSAAKRARQSIRKTAVNNARKSTVK) are disordered. Polar residues predominate over residues 19 to 29 (AVNNARKSTVK).

This sequence belongs to the bacterial ribosomal protein bS20 family.

In terms of biological role, binds directly to 16S ribosomal RNA. This Bdellovibrio bacteriovorus (strain ATCC 15356 / DSM 50701 / NCIMB 9529 / HD100) protein is Small ribosomal subunit protein bS20.